Consider the following 397-residue polypeptide: pH-sensitive adenylate cyclase MT1302 (397 aa).

The segment at 1 to 191 (MTDHVREADD…IQDMLFMQLR (191 aa)) is regulatory domain. Positions 192–206 (HMMETEAVNAGERAA) are linker. The segment at 211-397 (PGARQVTVAF…QDDDLAGSSP (187 aa)) is catalytic domain. Positions 217–325 (TVAFADLVGF…SPVNVASRVT (109 aa)) constitute a Guanylate cyclase domain. Mn(2+) is bound at residue D222. K261 is a substrate binding site. D265 lines the Mn(2+) pocket. R298 lines the ATP pocket. Position 312 (D312) interacts with substrate.

It belongs to the adenylyl cyclase class-4/guanylyl cyclase family. Homodimer. Mn(2+) is required as a cofactor. It depends on Mg(2+) as a cofactor.

It carries out the reaction ATP = 3',5'-cyclic AMP + diphosphate. Its function is as follows. Catalyzes the formation of the second messenger cAMP. In Mycobacterium tuberculosis (strain CDC 1551 / Oshkosh), this protein is pH-sensitive adenylate cyclase MT1302.